An 84-amino-acid polypeptide reads, in one-letter code: Gomesin-like peptide (84 aa).

The first 23 residues, 1–23 (MNRTRALVCLFLAVLILAHESEA), serve as a signal peptide directing secretion. The residue at position 24 (Gln-24) is a Pyrrolidone carboxylic acid. 2 disulfides stabilise this stretch: Cys-25/Cys-38 and Cys-29/Cys-34. Arg-41 bears the Arginine amide mark. A propeptide spanning residues 42–84 (GKRSVEEPSGGAQVVEKRAVDDADIPSAVEERELDEEESIEFR) is cleaved from the precursor.

In terms of tissue distribution, expressed by the venom gland.

The protein localises to the secreted. In terms of biological role, antibacterial peptide. This is Gomesin-like peptide from Hadronyche infensa (Fraser island funnel-web spider).